A 70-amino-acid chain; its full sequence is Small ribosomal subunit protein bS21 (70 aa).

Positions 39–70 (EKPTTERKRKKAAAVSRTRKRLRSQMLPKKLY) are disordered. Positions 45–61 (RKRKKAAAVSRTRKRLR) are enriched in basic residues.

It belongs to the bacterial ribosomal protein bS21 family.

This Ralstonia nicotianae (strain ATCC BAA-1114 / GMI1000) (Ralstonia solanacearum) protein is Small ribosomal subunit protein bS21.